A 118-amino-acid chain; its full sequence is Sporulation protein YjcA (118 aa).

3 consecutive transmembrane segments (helical) span residues 8-28 (IVLL…DTIM), 62-82 (FIGE…GFLI), and 92-112 (AQWL…ETLV).

Belongs to the UPF0713 family.

The protein localises to the cell membrane. In terms of biological role, involved in sporulation. The sequence is that of Sporulation protein YjcA (yjcA) from Bacillus subtilis (strain 168).